The following is a 296-amino-acid chain: Ribonuclease HIII (296 aa).

The RNase H type-2 domain maps to 80–296 (LALIGSDEVG…NTKKAYQRLK (217 aa)). A divalent metal cation is bound by residues aspartate 86, glutamate 87, and aspartate 191.

It belongs to the RNase HII family. RnhC subfamily. It depends on Mn(2+) as a cofactor. Mg(2+) serves as cofactor.

The protein resides in the cytoplasm. It carries out the reaction Endonucleolytic cleavage to 5'-phosphomonoester.. Its function is as follows. Endonuclease that specifically degrades the RNA of RNA-DNA hybrids. This is Ribonuclease HIII from Streptococcus thermophilus (strain ATCC BAA-491 / LMD-9).